The sequence spans 265 residues: uncharacterized protein (265 aa).

It is found in the mitochondrion. This is an uncharacterized protein from Paramecium tetraurelia.